The chain runs to 525 residues: GMP synthase [glutamine-hydrolyzing] (525 aa).

A Glutamine amidotransferase type-1 domain is found at 8 to 206 (PLLILDFGSQ…VVDICKASTD (199 aa)). Cys-85 serves as the catalytic Nucleophile. Active-site residues include His-180 and Glu-182. The region spanning 207-400 (WTPEHIIDEA…LGLPHDMVYR (194 aa)) is the GMPS ATP-PPase domain. 234–240 (SGGVDSS) contacts ATP.

As to quaternary structure, homodimer.

It carries out the reaction XMP + L-glutamine + ATP + H2O = GMP + L-glutamate + AMP + diphosphate + 2 H(+). It functions in the pathway purine metabolism; GMP biosynthesis; GMP from XMP (L-Gln route): step 1/1. Its function is as follows. Catalyzes the synthesis of GMP from XMP. The chain is GMP synthase [glutamine-hydrolyzing] from Legionella pneumophila subsp. pneumophila (strain Philadelphia 1 / ATCC 33152 / DSM 7513).